The primary structure comprises 374 residues: Protein Brevis radix-like 2 (374 aa).

Disordered stretches follow at residues 12–43 (NTNN…IKSL) and 57–80 (AYKS…ADSD). A compositionally biased stretch (polar residues) spans 65-80 (SGSSNQNKNRSYADSD). One can recognise a BRX 1 domain in the interval 143–198 (KEWVAQVEPGVLITFVSLPEGGNDMKRIRFSREMFDKWQAQKWWAENFDKVMELYN). The interval 205 to 316 (QSVPLPTPPR…EELSVSNASD (112 aa)) is disordered. Polar residues-rich tracts occupy residues 246 to 259 (SSGS…TQTQ) and 267 to 288 (GLAT…SSVD). Positions 289-307 (ESARSSFSREEEEADHSGE) are enriched in basic and acidic residues. A BRX 2 domain is found at 319 to 374 (TEWVEQDEAGVYITIRALPDGTRELRRVRFSREKFGETNARLWWEQNRARIQQQYL).

The protein belongs to the BRX family. As to expression, expressed in roots.

The protein resides in the nucleus. The chain is Protein Brevis radix-like 2 (BRXL2) from Arabidopsis thaliana (Mouse-ear cress).